A 536-amino-acid chain; its full sequence is Fanconi anemia group E protein (536 aa).

The interaction with FANCC stretch occupies residues 150–371; sequence MEGASPLSER…VLTRSLFLGR (222 aa). A disordered region spans residues 171–252; the sequence is LGLGGRRLKS…ADGGSASPIK (82 aa). The span at 230–239 shows a compositional bias: basic and acidic residues; it reads EKERPEHKSL. Ser249 is modified (phosphoserine). Position 346 is a phosphothreonine; by CHEK1 (Thr346). Residue Ser374 is modified to Phosphoserine; by CHEK1.

As to quaternary structure, belongs to the multisubunit FA complex composed of FANCA, FANCB, FANCC, FANCE, FANCF, FANCG, FANCL/PHF9 and FANCM. The complex is not found in FA patients. Interacts with FANCC and FANCD2. Post-translationally, phosphorylated. Phosphorylation by CHEK1 at Thr-346 and Ser-374 regulates its function in DNA cross-links repair. Ubiquitinated. Phosphorylation by CHEK1 induces polyubiquitination and degradation.

Its subcellular location is the nucleus. Functionally, as part of the Fanconi anemia (FA) complex functions in DNA cross-links repair. Required for the nuclear accumulation of FANCC and provides a critical bridge between the FA complex and FANCD2. This chain is Fanconi anemia group E protein (FANCE), found in Homo sapiens (Human).